An 846-amino-acid polypeptide reads, in one-letter code: Protein kintoun (846 aa).

Disordered regions lie at residues 216-240 (TAEE…GKPE), 372-405 (LRHF…DSKA), 574-631 (QALK…ESAC), and 762-846 (KKNQ…EMDD). Residues 372–382 (LRHFSREDSGV) show a composition bias toward basic and acidic residues. Ser380 is subject to Phosphoserine. The segment covering 391–400 (PVEEDPDGEL) has biased composition (acidic residues). Residues 583 to 603 (GTKEEEEKGNQDQEPESDKQH) are compositionally biased toward basic and acidic residues. 2 stretches are compositionally biased toward basic residues: residues 611-622 (KAGKKQRKRNKK) and 762-776 (KKNQ…RAQQ). Ser780 carries the post-translational modification Phosphoserine. Over residues 795–809 (LKQQENQSRNCNKPN) the composition is skewed to polar residues.

The protein belongs to the PIH1 family. Kintoun subfamily. In terms of assembly, interacts with Pp1alpha-96A, Pp1-87B, Pp1-13C and flw.

The protein localises to the cytoplasm. Required for cytoplasmic pre-assembly of axonemal dyneins, thereby playing a central role in motility in cilia and flagella. Involved in pre-assembly of dynein arm complexes in the cytoplasm before intraflagellar transport loads them for the ciliary compartment. This Drosophila yakuba (Fruit fly) protein is Protein kintoun.